Consider the following 278-residue polypeptide: 4-deoxy-L-threo-5-hexosulose-uronate ketol-isomerase (278 aa).

Zn(2+) contacts are provided by histidine 196, histidine 198, glutamate 203, and histidine 245.

It belongs to the KduI family. Homohexamer. The cofactor is Zn(2+).

It carries out the reaction 5-dehydro-4-deoxy-D-glucuronate = 3-deoxy-D-glycero-2,5-hexodiulosonate. It functions in the pathway glycan metabolism; pectin degradation; 2-dehydro-3-deoxy-D-gluconate from pectin: step 4/5. Its function is as follows. Catalyzes the isomerization of 5-dehydro-4-deoxy-D-glucuronate to 3-deoxy-D-glycero-2,5-hexodiulosonate. This chain is 4-deoxy-L-threo-5-hexosulose-uronate ketol-isomerase, found in Escherichia coli (strain 55989 / EAEC).